The primary structure comprises 389 residues: MSWWWAGAIGAAKKRLEEDDAQPKHSSVALIVGVTGIIGNSLAEILPLADTPGGPWKVYGVARRTRPAWHEDNPINYVQCDISDPDDSQAKLSPLTDVTHVFYVTWANRSTEQENCEANSKMFRNVLDAVIPNCPNLKHISLQTGRKHYMGPFESYGKIESHDPPYTEDLPRLKYMNFYYDLEDIMLEEVEKKEGLTWSVHRPGNIFGFSPYSMMNLVGTLCVYAAICKHEGKVLRFTGCKAAWDGYSDCSDADLIAEHHIWAAVDPYAKNEAFNVSNGDVFKWKHFWKVLAEQFGVGCGEYEEGVDLKLQDLMKGKEPVWEEIVRENGLTPTKLKDVGIWWFGDVILGNECFLDSMNKSKEHGFLGFRNSKNAFISWIDKAKAYKIVP.

NADP(+) contacts are provided by residues 35–37, 63–64, 81–82, threonine 105, and glutamine 143; these read TGI, RR, and DI. Residues lysine 147 and tyrosine 179 contribute to the active site. NADP(+) is bound by residues tyrosine 179, isoleucine 206, and 213 to 215; that span reads SMM.

It belongs to the short-chain dehydrogenases/reductases (SDR) family. Highly divergent. In terms of assembly, homodimer.

The enzyme catalyses 5beta-cholestan-3-one + NADP(+) = cholest-4-en-3-one + NADPH + H(+). The catalysed reaction is 4,5beta-dihydrocortisone + NADP(+) = cortisone + NADPH + H(+). In terms of biological role, involved in cardenolide biosynthesis. Catalyzes the stereospecific conversion of progesterone to 5-beta-pregnane-3,20-dione. Can use progesterone, testosterone, 4-androstene-3,17-dione, cortisol and cortisone as substrates, but not pregnenolone, 21-OH-pregnenolone or isoprogesterone. NADPH could not be replaced by NADH. This Digitalis lanata (Grecian foxglove) protein is 3-oxo-Delta(4,5)-steroid 5-beta-reductase.